The primary structure comprises 157 residues: Small ribosomal subunit protein uS7 (157 aa).

The protein belongs to the universal ribosomal protein uS7 family. In terms of assembly, part of the 30S ribosomal subunit. Contacts proteins S9 and S11.

One of the primary rRNA binding proteins, it binds directly to 16S rRNA where it nucleates assembly of the head domain of the 30S subunit. Is located at the subunit interface close to the decoding center, probably blocks exit of the E-site tRNA. The sequence is that of Small ribosomal subunit protein uS7 from Caldicellulosiruptor bescii (strain ATCC BAA-1888 / DSM 6725 / KCTC 15123 / Z-1320) (Anaerocellum thermophilum).